The primary structure comprises 770 residues: U3 small nucleolar RNA-associated protein 14 homolog A (770 aa).

A compositionally biased stretch (polar residues) spans Met-1–Gln-17. Residues Met-1–Arg-65 are disordered. Phosphoserine occurs at positions 30, 32, and 53. Residues Glu-41–Ala-68 adopt a coiled-coil conformation. Residues Gly-56–Arg-65 show a composition bias toward basic and acidic residues. Phosphoserine is present on residues Ser-78 and Ser-82. Thr-206 carries the post-translational modification Phosphothreonine. Coiled coils occupy residues Ser-217 to Arg-291 and Leu-318 to Gly-348. 3 disordered regions span residues Leu-334–Asp-361, Lys-392–Glu-455, and Leu-467–Arg-505. Composition is skewed to acidic residues over residues Glu-343 to Leu-358 and Asp-396 to Glu-410. Phosphoserine occurs at positions 406 and 408. The span at Glu-411–His-444 shows a compositional bias: basic and acidic residues. Lys-449 is covalently cross-linked (Glycyl lysine isopeptide (Lys-Gly) (interchain with G-Cter in SUMO2)). A Phosphoserine modification is found at Ser-453. Position 567 is a phosphoserine (Ser-567). Arg-588 carries the citrulline modification. Lys-732 is covalently cross-linked (Glycyl lysine isopeptide (Lys-Gly) (interchain with G-Cter in SUMO2)).

Belongs to the UTP14 family. In terms of assembly, interacts with DHX37. Post-translationally, citrullinated by PADI4.

Its subcellular location is the nucleus. The protein resides in the nucleolus. May be required for ribosome biogenesis. The sequence is that of U3 small nucleolar RNA-associated protein 14 homolog A (UTP14A) from Bos taurus (Bovine).